The sequence spans 260 residues: NAD-capped RNA hydrolase NudC (260 aa).

Residue Arg74 participates in substrate binding. Zn(2+) is bound by residues Cys103, Cys106, Cys121, and Cys124. Residue Tyr129 participates in substrate binding. The 124-residue stretch at 130–253 (PRIFPCIIVA…TIARALIEQT (124 aa)) folds into the Nudix hydrolase domain. Ala163, Glu179, and Glu183 together coordinate a divalent metal cation. Residues 164–185 (GFLEAGETLEDCVAREVHEETG) carry the Nudix box motif. Substrate is bound at residue 197–204 (QPWAFPSS). Glu224 provides a ligand contact to a divalent metal cation. Ala246 provides a ligand contact to substrate.

Belongs to the Nudix hydrolase family. NudC subfamily. Homodimer. Requires Mg(2+) as cofactor. It depends on Mn(2+) as a cofactor. The cofactor is Zn(2+).

The enzyme catalyses a 5'-end NAD(+)-phospho-ribonucleoside in mRNA + H2O = a 5'-end phospho-adenosine-phospho-ribonucleoside in mRNA + beta-nicotinamide D-ribonucleotide + 2 H(+). It carries out the reaction NAD(+) + H2O = beta-nicotinamide D-ribonucleotide + AMP + 2 H(+). It catalyses the reaction NADH + H2O = reduced beta-nicotinamide D-ribonucleotide + AMP + 2 H(+). MRNA decapping enzyme that specifically removes the nicotinamide adenine dinucleotide (NAD) cap from a subset of mRNAs by hydrolyzing the diphosphate linkage to produce nicotinamide mononucleotide (NMN) and 5' monophosphate mRNA. The NAD-cap is present at the 5'-end of some mRNAs and stabilizes RNA against 5'-processing. Has preference for mRNAs with a 5'-end purine. Catalyzes the hydrolysis of a broad range of dinucleotide pyrophosphates. This chain is NAD-capped RNA hydrolase NudC, found in Vibrio parahaemolyticus serotype O3:K6 (strain RIMD 2210633).